We begin with the raw amino-acid sequence, 79 residues long: Small ribosomal subunit protein bS18 (79 aa).

This sequence belongs to the bacterial ribosomal protein bS18 family. As to quaternary structure, part of the 30S ribosomal subunit. Forms a tight heterodimer with protein bS6.

Its function is as follows. Binds as a heterodimer with protein bS6 to the central domain of the 16S rRNA, where it helps stabilize the platform of the 30S subunit. This chain is Small ribosomal subunit protein bS18, found in Onion yellows phytoplasma (strain OY-M).